We begin with the raw amino-acid sequence, 193 residues long: Xanthine phosphoribosyltransferase (193 aa).

The xanthine site is built by Leu20 and Asn27. 129–133 (ANGKA) contributes to the 5-phospho-alpha-D-ribose 1-diphosphate binding site. Lys157 contacts xanthine.

This sequence belongs to the purine/pyrimidine phosphoribosyltransferase family. Xpt subfamily. Homodimer.

It is found in the cytoplasm. The enzyme catalyses XMP + diphosphate = xanthine + 5-phospho-alpha-D-ribose 1-diphosphate. It participates in purine metabolism; XMP biosynthesis via salvage pathway; XMP from xanthine: step 1/1. Functionally, converts the preformed base xanthine, a product of nucleic acid breakdown, to xanthosine 5'-monophosphate (XMP), so it can be reused for RNA or DNA synthesis. This Bifidobacterium adolescentis (strain ATCC 15703 / DSM 20083 / NCTC 11814 / E194a) protein is Xanthine phosphoribosyltransferase.